Reading from the N-terminus, the 865-residue chain is Probable beta-glucosidase J (865 aa).

Residue aspartate 233 is part of the active site. N-linked (GlcNAc...) asparagine glycosylation is found at asparagine 330, asparagine 447, asparagine 503, and asparagine 764. A PA14 domain is found at 411–579; the sequence is TGQPGYTFRV…DTDTAIQQAV (169 aa).

This sequence belongs to the glycosyl hydrolase 3 family.

It is found in the secreted. The catalysed reaction is Hydrolysis of terminal, non-reducing beta-D-glucosyl residues with release of beta-D-glucose.. It participates in glycan metabolism; cellulose degradation. Functionally, beta-glucosidases are one of a number of cellulolytic enzymes involved in the degradation of cellulosic biomass. Catalyzes the last step releasing glucose from the inhibitory cellobiose. The sequence is that of Probable beta-glucosidase J (bglJ) from Aspergillus fumigatus (strain ATCC MYA-4609 / CBS 101355 / FGSC A1100 / Af293) (Neosartorya fumigata).